The sequence spans 126 residues: UPF0102 protein MXAN_3551 (126 aa).

Belongs to the UPF0102 family.

In Myxococcus xanthus (strain DK1622), this protein is UPF0102 protein MXAN_3551.